A 399-amino-acid polypeptide reads, in one-letter code: Zinc finger HIT domain-containing protein 2 (399 aa).

M1 bears the N-acetylmethionine mark. C7, C10, C22, C25, C30, C34, H38, and C41 together coordinate Zn(2+). An HIT-type zinc finger spans residues C7–C41. Disordered regions lie at residues R70–G97 and A152–F175. A compositionally biased stretch (gly residues) spans L86–S96. T161 is modified (phosphothreonine).

Interacts (via HIT-type zinc finger) with RUVBL2 in the presence of ATP or ADP; shows a stronger interaction in the presence of ADP. In terms of tissue distribution, low expression in most tissues; highly expressed in testis; particularly in seminiferous tubules.

May act as a bridging factor mediating the interaction between the R2TP/Prefoldin-like (R2TP/PFDL) complex and U5 small nuclear ribonucleoprotein (U5 snRNP). Required for the interaction of R2TP complex subunit RPAP3 and prefoldin-like subunit URI1 with U5 snRNP proteins EFTUD2 and PRPF8. May play a role in regulating the composition of the U5 snRNP complex. This is Zinc finger HIT domain-containing protein 2 (Znhit2) from Mus musculus (Mouse).